The chain runs to 611 residues: Broad-specificity linear acyl-CoA dehydrogenase FadE5 (611 aa).

Residues 162-165, S171, and T198 each bind FAD; that span reads MVLT. S171 lines the a 2,3-saturated acyl-CoA pocket. A 2,3-saturated acyl-CoA contacts are provided by residues 224–225 and R301; that span reads TK. R326 is an FAD binding site. An a 2,3-saturated acyl-CoA-binding site is contributed by K338. 420-424 lines the FAD pocket; the sequence is QTLGG. Residue E447 coordinates a 2,3-saturated acyl-CoA. E447 serves as the catalytic Proton acceptor. T449 contributes to the FAD binding site. A 2,3-saturated acyl-CoA-binding positions include D456 and 460–461; that span reads RK.

It belongs to the acyl-CoA dehydrogenase family. In terms of assembly, homodimer. The cofactor is FAD.

It catalyses the reaction a long-chain 2,3-saturated fatty acyl-CoA + oxidized [electron-transfer flavoprotein] + H(+) = a long-chain (2E)-enoyl-CoA + reduced [electron-transfer flavoprotein]. The catalysed reaction is a medium-chain 2,3-saturated fatty acyl-CoA + oxidized [electron-transfer flavoprotein] + H(+) = a medium-chain (2E)-enoyl-CoA + reduced [electron-transfer flavoprotein]. The enzyme catalyses a short-chain 2,3-saturated fatty acyl-CoA + oxidized [electron-transfer flavoprotein] + H(+) = a short-chain (2E)-enoyl-CoA + reduced [electron-transfer flavoprotein]. It carries out the reaction octadecanoyl-CoA + oxidized [electron-transfer flavoprotein] + H(+) = (2E)-octadecenoyl-CoA + reduced [electron-transfer flavoprotein]. It catalyses the reaction oxidized [electron-transfer flavoprotein] + hexadecanoyl-CoA + H(+) = (2E)-hexadecenoyl-CoA + reduced [electron-transfer flavoprotein]. The catalysed reaction is dodecanoyl-CoA + oxidized [electron-transfer flavoprotein] + H(+) = (2E)-dodecenoyl-CoA + reduced [electron-transfer flavoprotein]. The enzyme catalyses decanoyl-CoA + oxidized [electron-transfer flavoprotein] + H(+) = (2E)-decenoyl-CoA + reduced [electron-transfer flavoprotein]. It carries out the reaction hexanoyl-CoA + oxidized [electron-transfer flavoprotein] + H(+) = (2E)-hexenoyl-CoA + reduced [electron-transfer flavoprotein]. It catalyses the reaction butanoyl-CoA + oxidized [electron-transfer flavoprotein] + H(+) = (2E)-butenoyl-CoA + reduced [electron-transfer flavoprotein]. Its pathway is lipid metabolism; fatty acid metabolism. Acyl-CoA dehydrogenase that exhibits broad specificity for linear acyl-CoA substrates, with a preference for long-chain substrates. The protein is Broad-specificity linear acyl-CoA dehydrogenase FadE5 of Mycobacterium tuberculosis (strain ATCC 25618 / H37Rv).